A 513-amino-acid chain; its full sequence is ATP synthase subunit alpha 1 (513 aa).

Gly-169–Thr-176 provides a ligand contact to ATP.

The protein belongs to the ATPase alpha/beta chains family. In terms of assembly, F-type ATPases have 2 components, CF(1) - the catalytic core - and CF(0) - the membrane proton channel. CF(1) has five subunits: alpha(3), beta(3), gamma(1), delta(1), epsilon(1). CF(0) has three main subunits: a(1), b(2) and c(9-12). The alpha and beta chains form an alternating ring which encloses part of the gamma chain. CF(1) is attached to CF(0) by a central stalk formed by the gamma and epsilon chains, while a peripheral stalk is formed by the delta and b chains.

The protein resides in the cell inner membrane. The catalysed reaction is ATP + H2O + 4 H(+)(in) = ADP + phosphate + 5 H(+)(out). Its function is as follows. Produces ATP from ADP in the presence of a proton gradient across the membrane. The alpha chain is a regulatory subunit. The polypeptide is ATP synthase subunit alpha 1 (Nitrosospira multiformis (strain ATCC 25196 / NCIMB 11849 / C 71)).